The sequence spans 335 residues: Teichoic acids export ATP-binding protein TagH (335 aa).

Residues 26-246 (IKGLFMPKSQ…YDEFVKWFNK (221 aa)) form the ABC transporter domain. 60–67 (GINGSGKS) is an ATP binding site.

This sequence belongs to the ABC transporter superfamily. Teichoic acids exporter (TC 3.A.1.104.1) family. In terms of assembly, the complex is composed of two ATP-binding proteins (TagH) and two transmembrane proteins (TagG).

It is found in the cell membrane. The enzyme catalyses ATP + H2O + teichoic acidSide 1 = ADP + phosphate + teichoic acidSide 2.. In terms of biological role, part of the ABC transporter complex TagGH involved in teichoic acids export. Responsible for energy coupling to the transport system. This Listeria monocytogenes serotype 4b (strain F2365) protein is Teichoic acids export ATP-binding protein TagH.